The chain runs to 210 residues: ATP-dependent Clp protease proteolytic subunit 1 (210 aa).

Ser-106 serves as the catalytic Nucleophile. Residue His-131 is part of the active site.

It belongs to the peptidase S14 family. Fourteen ClpP subunits assemble into 2 heptameric rings which stack back to back to give a disk-like structure with a central cavity, resembling the structure of eukaryotic proteasomes.

It is found in the cytoplasm. The enzyme catalyses Hydrolysis of proteins to small peptides in the presence of ATP and magnesium. alpha-casein is the usual test substrate. In the absence of ATP, only oligopeptides shorter than five residues are hydrolyzed (such as succinyl-Leu-Tyr-|-NHMec, and Leu-Tyr-Leu-|-Tyr-Trp, in which cleavage of the -Tyr-|-Leu- and -Tyr-|-Trp bonds also occurs).. Functionally, cleaves peptides in various proteins in a process that requires ATP hydrolysis. Has a chymotrypsin-like activity. Plays a major role in the degradation of misfolded proteins. The sequence is that of ATP-dependent Clp protease proteolytic subunit 1 from Chelativorans sp. (strain BNC1).